The chain runs to 1435 residues: Protein clueless (1435 aa).

Residues 1 to 97 (MALEMDSKNS…KPEGDGDADA (97 aa)) form a disordered region. A compositionally biased stretch (low complexity) spans 18–35 (AAAATTKTNKAKENNNLA). A compositionally biased stretch (polar residues) spans 38 to 50 (KKNQSQNLVNGNG). The span at 58–67 (TKKKGKKNRN) shows a compositional bias: basic residues. Residue serine 266 is modified to Phosphoserine. Residues 420–662 (RAEDAFSSKL…RTFPPDVNFL (243 aa)) form the Clu domain. Basic and acidic residues-rich tracts occupy residues 719 to 731 (KKPE…EKKQ) and 752 to 762 (PNEKEKDTPVE). Disordered regions lie at residues 719–762 (KKPE…TPVE) and 952–998 (VSND…SSSS). A compositionally biased stretch (basic residues) spans 959–975 (KKRGGNGGKHNKHKSSK). Residues 988 to 998 (NGGSTTSSSSS) show a composition bias toward low complexity. TPR repeat units lie at residues 1096–1129 (AYNF…LNNV), 1222–1255 (ALID…NLKY), and 1257–1290 (GNKA…EKET). A disordered region spans residues 1407 to 1435 (EVLAPQDNNKEQAATAQQLTNGDKVAVSS). A compositionally biased stretch (polar residues) spans 1417–1435 (EQAATAQQLTNGDKVAVSS).

Belongs to the CLU family.

It localises to the cytoplasm. Its function is as follows. mRNA-binding protein involved in proper cytoplasmic distribution of mitochondria. This Drosophila persimilis (Fruit fly) protein is Protein clueless.